A 358-amino-acid chain; its full sequence is GTPase Obg (358 aa).

Residues 1–159 (MKFVDEVTIR…RNLHLELRLL (159 aa)) enclose the Obg domain. Residues 160–334 (ADVGLLGMPN…LAQDVMNRLE (175 aa)) enclose the OBG-type G domain. Residues 166–173 (GMPNAGKS), 191–195 (FTTLY), 213–216 (DIPG), 284–287 (NKLD), and 315–317 (SAL) each bind GTP. Mg(2+)-binding residues include S173 and T193. The disordered stretch occupies residues 337–358 (DEEAREAGERARREQRQEEGPE). A compositionally biased stretch (basic and acidic residues) spans 341–358 (REAGERARREQRQEEGPE).

The protein belongs to the TRAFAC class OBG-HflX-like GTPase superfamily. OBG GTPase family. As to quaternary structure, monomer. Mg(2+) serves as cofactor.

It is found in the cytoplasm. Its function is as follows. An essential GTPase which binds GTP, GDP and possibly (p)ppGpp with moderate affinity, with high nucleotide exchange rates and a fairly low GTP hydrolysis rate. Plays a role in control of the cell cycle, stress response, ribosome biogenesis and in those bacteria that undergo differentiation, in morphogenesis control. This chain is GTPase Obg, found in Alkalilimnicola ehrlichii (strain ATCC BAA-1101 / DSM 17681 / MLHE-1).